The following is a 473-amino-acid chain: Photosystem II CP43 reaction center protein (473 aa).

Positions M1–E14 are excised as a propeptide. At T15 the chain carries N-acetylthreonine. T15 is subject to Phosphothreonine. 5 consecutive transmembrane segments (helical) span residues L69 to A93, L134 to N155, K178 to T200, K255 to S275, and W291 to A312. E367 provides a ligand contact to [CaMn4O5] cluster. A helical transmembrane segment spans residues R447 to P471.

Belongs to the PsbB/PsbC family. PsbC subfamily. As to quaternary structure, PSII is composed of 1 copy each of membrane proteins PsbA, PsbB, PsbC, PsbD, PsbE, PsbF, PsbH, PsbI, PsbJ, PsbK, PsbL, PsbM, PsbT, PsbX, PsbY, PsbZ, Psb30/Ycf12, at least 3 peripheral proteins of the oxygen-evolving complex and a large number of cofactors. It forms dimeric complexes. The cofactor is Binds multiple chlorophylls and provides some of the ligands for the Ca-4Mn-5O cluster of the oxygen-evolving complex. It may also provide a ligand for a Cl- that is required for oxygen evolution. PSII binds additional chlorophylls, carotenoids and specific lipids..

Its subcellular location is the plastid membrane. Functionally, one of the components of the core complex of photosystem II (PSII). It binds chlorophyll and helps catalyze the primary light-induced photochemical processes of PSII. PSII is a light-driven water:plastoquinone oxidoreductase, using light energy to abstract electrons from H(2)O, generating O(2) and a proton gradient subsequently used for ATP formation. The polypeptide is Photosystem II CP43 reaction center protein (Cuscuta obtusiflora (Peruvian dodder)).